Consider the following 529-residue polypeptide: MKIPFKPFILFHLTLFIRFILTPQIQYYIKSGGNHLSFLSRLFGPKPIIAKSRFITIEDTKTAPFTKKTVGSGYSMRPDVYYIVASVELGNTTTKCILTATNLNTSRTYLLDKTVKMTRDIRPPREREEVFGKTVWGVELTKEAVSELVRDTILESLRRAKVDIERDLDFVVRSTGVTAGFGSPEEVGKLIIALADGCLAAGIPPRKMAPALSKENIPERLREFCYLDRVIFDGAVASVIPPTGREVVANEMEGELVTAGIKVGSKWTNVDYRNPCVSLDFGTTLAGRIVNADEPYARTVGNFCGLAGAIPDAIIRGTEMVDCRGGAALDLYKKSILKGANWKKARRHAERIHDEIIDIRKVPANRKRFGTVPVDTEAAYSAGTTLIGCDAGKNGDKLPELTEIGHSIYQEDGIHTLFATLDHVSALIAKRLIDEAFEEGVIEEGSVLGVTGRAGITGTKPSLILEYVKDRFRDCIFVSDALAMGAAVMARCMNSMGTPHKPLGGRQNGPCILGMRRKLQSRKEDKWIE.

This sequence to M.jannaschii MJ1451.

This is an uncharacterized protein from Methanothermobacter thermautotrophicus (strain ATCC 29096 / DSM 1053 / JCM 10044 / NBRC 100330 / Delta H) (Methanobacterium thermoautotrophicum).